The primary structure comprises 481 residues: Glutamate--tRNA ligase (481 aa).

Positions 28 to 38 (PSPTGFLHLGG) match the 'HIGH' region motif. Positions 139–148 (RYDGTWRPEP) are enriched in basic and acidic residues. A disordered region spans residues 139-159 (RYDGTWRPEPGKTLPPVPADR). The 'KMSKS' region signature appears at 260-264 (KLSKR). Residue K263 coordinates ATP.

Belongs to the class-I aminoacyl-tRNA synthetase family. Glutamate--tRNA ligase type 1 subfamily. Monomer.

It localises to the cytoplasm. The catalysed reaction is tRNA(Glu) + L-glutamate + ATP = L-glutamyl-tRNA(Glu) + AMP + diphosphate. In terms of biological role, catalyzes the attachment of glutamate to tRNA(Glu) in a two-step reaction: glutamate is first activated by ATP to form Glu-AMP and then transferred to the acceptor end of tRNA(Glu). The sequence is that of Glutamate--tRNA ligase from Bordetella bronchiseptica (strain ATCC BAA-588 / NCTC 13252 / RB50) (Alcaligenes bronchisepticus).